Consider the following 184-residue polypeptide: Ras-related protein Rap-1A (184 aa).

GTP contacts are provided by residues 10 to 18 (GSGGVGKSA), 29 to 35 (VEKYDPT), Gly-60, and 116 to 119 (NKCD). An Effector region motif is present at residues 32–40 (YDPTIEDSY). Position 181 is a cysteine methyl ester (Cys-181). Residue Cys-181 is the site of S-geranylgeranyl cysteine attachment. Positions 182 to 184 (LLL) are cleaved as a propeptide — removed in mature form.

The protein belongs to the small GTPase superfamily. Ras family. As to quaternary structure, found in a complex, at least composed of ITGB1BP1, KRIT1 and RAP1A. Interacts (active GTP-bound form preferentially) with KRIT1 (via C-terminus FERM domain); the interaction does not induce the opening conformation of KRIT1. Found in a complex composed of CDH1, RAP1A and PKP3; PKP3 acts as a scaffold protein within the complex, the complex is required for CDH1 localization to mature desmosome cell junctions. In its GTP-bound form interacts with PLCE1 and RADIL. Interacts with SGSM1, SGSM2 and SGSM3. Interacts (via GTP-bound active form) with RAPGEF2 (via Ras-associating domain). Interacts with TBC1D21. Interacts with RAP1GDS1.

The protein resides in the cell membrane. The protein localises to the cytoplasm. It is found in the perinuclear region. It localises to the cell junction. Its subcellular location is the early endosome. The enzyme catalyses GTP + H2O = GDP + phosphate + H(+). With respect to regulation, activated by guanine nucleotide-exchange factors (GEF) EPAC and EPAC2 in a cAMP-dependent manner, and GFR. Functionally, counteracts the mitogenic function of Ras, at least partly because it can interact with Ras GAPs and RAF in a competitive manner. Together with ITGB1BP1, regulates KRIT1 localization to microtubules and membranes. Plays a role in nerve growth factor (NGF)-induced neurite outgrowth. Plays a role in the regulation of embryonic blood vessel formation. Involved in the establishment of basal endothelial barrier function. Facilitates the progressive accumulation of CDH1 at mature desmosome junctions via cAMP-dependent signaling and its interaction with PKP3. May be involved in the regulation of the vascular endothelial growth factor receptor KDR expression at endothelial cell-cell junctions. This chain is Ras-related protein Rap-1A (RAP1A), found in Bos taurus (Bovine).